A 940-amino-acid polypeptide reads, in one-letter code: Glutamate receptor 2.9 (940 aa).

The N-terminal stretch at 1-23 is a signal peptide; that stretch reads MKTNNTFLSYFVCGFLLMGVGLG. The Extracellular portion of the chain corresponds to 24 to 566; that stretch reads QNQTSEIKVG…DTWVFLEPWS (543 aa). N-linked (GlcNAc...) asparagine glycosylation is found at Asn25, Asn39, Asn115, Asn338, Asn345, and Asn528. The helical transmembrane segment at 567–587 threads the bilayer; that stretch reads LELWVTTGCFFVFIGFVVWLF. The Cytoplasmic segment spans residues 588-596; it reads EHRVNTDFR. The helical transmembrane segment at 597 to 617 threads the bilayer; it reads GPPQYQIGTSLWFSFSTMVFA. The Cytoplasmic segment spans residues 618-628; sequence HRENVVSNLAR. Residues 629-649 traverse the membrane as a helical segment; sequence FVVVVWCFVVLVLTQSYTASL. Residues 650-811 are Extracellular-facing; it reads TSFLTVQSLQ…NRLNLSSFLG (162 aa). N-linked (GlcNAc...) asparagine glycosylation is found at Asn771, Asn776, and Asn805. Residues 812-832 traverse the membrane as a helical segment; that stretch reads LFLIAGTAISFSLLVFVALFL. Residues 833-940 lie on the Cytoplasmic side of the membrane; it reads YEHRHTLGDD…ESDIECRVEQ (108 aa). 2 disordered regions span residues 876-900 and 914-940; these read ISSPMTHKTPSPSTVQITPWPQSPS and PSEERFTTQPIIHHEDGESDIECRVEQ.

This sequence belongs to the glutamate-gated ion channel (TC 1.A.10.1) family. In terms of assembly, may form heteromers. Expressed predominantly in roots.

Its subcellular location is the membrane. In terms of biological role, glutamate-gated receptor that probably acts as a non-selective cation channel. May be involved in light-signal transduction and calcium homeostasis via the regulation of calcium influx into cells. This chain is Glutamate receptor 2.9 (GLR2.9), found in Arabidopsis thaliana (Mouse-ear cress).